Consider the following 404-residue polypeptide: MARAIIIVIDSLGIGYSPDAVDFGDVGANTFANLARAYYEETGKEIFLPNLSALGMIKACEQASNQTFPYQGQEPSKGAYGFAQEISTGKDTPSGHWEMAGVPVLFDWGYFTDKNSSFPTSLIDDINRETGFDGILGNCHASGTEILTRLGQEHIETGLPICYTSADSVFQIAAHEEHFGLDNLYKYCETVRELLGDLNIGRVIARPFVGDSADNFARTGNRRDYSVLPPAPTVLDKISQEGTHVISVGKIADIFAHQGIDEKTKATGLNALFDATLDHINTAQDNSLIFTNLVNFDQDFGHRRDAIGYAKELEALDVRIPELFHAMSAEDVLFLTADHGCDPTWPGTEHTREYVPIIAYHHQIDSVNLGNRKTFADLGQSVAELFNVEAMDYGTSFLSEIYSK.

Aspartate 10, aspartate 297, histidine 302, aspartate 338, histidine 339, and histidine 350 together coordinate Mn(2+).

It belongs to the phosphopentomutase family. The cofactor is Mn(2+).

The protein resides in the cytoplasm. The catalysed reaction is 2-deoxy-alpha-D-ribose 1-phosphate = 2-deoxy-D-ribose 5-phosphate. The enzyme catalyses alpha-D-ribose 1-phosphate = D-ribose 5-phosphate. Its pathway is carbohydrate degradation; 2-deoxy-D-ribose 1-phosphate degradation; D-glyceraldehyde 3-phosphate and acetaldehyde from 2-deoxy-alpha-D-ribose 1-phosphate: step 1/2. Isomerase that catalyzes the conversion of deoxy-ribose 1-phosphate (dRib-1-P) and ribose 1-phosphate (Rib-1-P) to deoxy-ribose 5-phosphate (dRib-5-P) and ribose 5-phosphate (Rib-5-P), respectively. In Colwellia psychrerythraea (strain 34H / ATCC BAA-681) (Vibrio psychroerythus), this protein is Phosphopentomutase.